Reading from the N-terminus, the 346-residue chain is Melanoma-associated antigen B4 (346 aa).

Residues 1–18 show a composition bias toward basic residues; it reads MPRGQKSKLRAREKRQRT. Positions 1 to 107 are disordered; it reads MPRGQKSKLR…STSTERSLKD (107 aa). A compositionally biased stretch (polar residues) spans 45 to 54; that stretch reads VLRDTASSSL. Positions 92 to 101 are enriched in low complexity; the sequence is ASSSQASTST. Residues 109–307 enclose the MAGE domain; that stretch reads LTRKTKMLVQ…NNFPLLYEEA (199 aa). A disordered region spans residues 311 to 346; the sequence is EEERAGARPRVAARRGTTAMTSAYSRATSSSSSQPM. Residues 318–346 show a composition bias toward low complexity; that stretch reads RPRVAARRGTTAMTSAYSRATSSSSSQPM.

Expressed in testis.

The protein localises to the cytoplasm. This is Melanoma-associated antigen B4 (MAGEB4) from Homo sapiens (Human).